The following is a 347-amino-acid chain: Dihydroorotase (347 aa).

Zn(2+)-binding residues include H17 and H19. Residues 19-21 (HLR) and N45 contribute to the substrate site. The Zn(2+) site is built by K103, H140, and H178. K103 bears the N6-carboxylysine mark. Residue H140 participates in substrate binding. L223 is a binding site for substrate. D251 is a binding site for Zn(2+). D251 is a catalytic residue. Substrate-binding residues include H255 and A267.

This sequence belongs to the metallo-dependent hydrolases superfamily. DHOase family. Class II DHOase subfamily. In terms of assembly, homodimer. Zn(2+) serves as cofactor.

The enzyme catalyses (S)-dihydroorotate + H2O = N-carbamoyl-L-aspartate + H(+). Its pathway is pyrimidine metabolism; UMP biosynthesis via de novo pathway; (S)-dihydroorotate from bicarbonate: step 3/3. Functionally, catalyzes the reversible cyclization of carbamoyl aspartate to dihydroorotate. The polypeptide is Dihydroorotase (Citrobacter koseri (strain ATCC BAA-895 / CDC 4225-83 / SGSC4696)).